Here is a 237-residue protein sequence, read N- to C-terminus: Small ribosomal subunit protein uS3 (237 aa).

Positions 39 to 107 (IRAYLMEELK…ETHLNIVEVR (69 aa)) constitute a KH type-2 domain. The tract at residues 213–237 (MASERRATESDNQGGGGRDRRRENA) is disordered.

Belongs to the universal ribosomal protein uS3 family. Part of the 30S ribosomal subunit. Forms a tight complex with proteins S10 and S14.

Its function is as follows. Binds the lower part of the 30S subunit head. Binds mRNA in the 70S ribosome, positioning it for translation. This Sinorhizobium fredii (strain NBRC 101917 / NGR234) protein is Small ribosomal subunit protein uS3.